A 363-amino-acid polypeptide reads, in one-letter code: Oxygen-dependent coproporphyrinogen-III oxidase (363 aa).

Serine 119 contacts substrate. Positions 123 and 133 each coordinate a divalent metal cation. Catalysis depends on histidine 133, which acts as the Proton donor. 135 to 137 contacts substrate; sequence NYR. Residues histidine 167 and histidine 197 each coordinate a divalent metal cation. The important for dimerization stretch occupies residues 287 to 322; it reads YVEFNLVWDRGTIFGLQTNGRTESILMSLPPLVRWE.

This sequence belongs to the aerobic coproporphyrinogen-III oxidase family. Homodimer. A divalent metal cation serves as cofactor.

The protein localises to the cytoplasm. The enzyme catalyses coproporphyrinogen III + O2 + 2 H(+) = protoporphyrinogen IX + 2 CO2 + 2 H2O. It functions in the pathway porphyrin-containing compound metabolism; protoporphyrin-IX biosynthesis; protoporphyrinogen-IX from coproporphyrinogen-III (O2 route): step 1/1. Its function is as follows. Involved in the heme and chlorophyll biosynthesis. Catalyzes the aerobic oxidative decarboxylation of propionate groups of rings A and B of coproporphyrinogen-III to yield the vinyl groups in protoporphyrinogen-IX. The sequence is that of Oxygen-dependent coproporphyrinogen-III oxidase from Parasynechococcus marenigrum (strain WH8102).